The following is a 520-amino-acid chain: Signal peptide peptidase-like 2A (520 aa).

Positions 1-25 (MGPQRRLSPAGAALLWGFLLQLTAA) are cleaved as a signal peptide. Over 26–172 (QEAILHASGN…PSWPNFDYTM (147 aa)) the chain is Lumenal. 6 N-linked (GlcNAc...) asparagine glycosylation sites follow: N58, N66, N74, N116, N126, and N149. In terms of domain architecture, PA spans 63–151 (SLMNLTSTPL…YKDFRDMNQT (89 aa)). N155 carries N-linked (GlcNAc...) (complex) asparagine glycosylation. A helical transmembrane segment spans residues 173–193 (VVIFVIAVFTVALGGYWSGLV). The Cytoplasmic segment spans residues 194–220 (ELENLKAVTTEDREMRKKKEEYLTFSP). The helical transmembrane segment at 221–241 (LTVVIFVVICCVMMVLLYFFY) threads the bilayer. The Lumenal segment spans residues 242 to 247 (KWLVYV). A helical membrane pass occupies residues 248–268 (MIAIFCIASAMSLYNCLAALI). The Cytoplasmic portion of the chain corresponds to 269-285 (HKIPYGQCTIACRGKNM). Residues 286–306 (EVRLIFLSGLCIAVAVVWAVF) traverse the membrane as a helical segment. The Lumenal portion of the chain corresponds to 307 to 311 (RNEDR). Residues 312–332 (WAWILQDILGIAFCLNLIKTL) traverse the membrane as a helical segment. Residues 333–340 (KLPNFKSC) are Cytoplasmic-facing. Residues 341–361 (VILLGLLLLYDVFFVFITPFI) traverse the membrane as a helical segment. D351 is a catalytic residue. Residues 362 to 399 (TKNGESIMVELAAGPFGNNEKLPVVIRVPKLIYFSVMS) lie on the Lumenal side of the membrane. Residues 400-420 (VCLMPVSILGFGDIIVPGLLI) form a helical membrane-spanning segment. Residue D412 is part of the active site. The Cytoplasmic portion of the chain corresponds to 421–437 (AYCRRFDVQTGSSYIYY). Residues 438–458 (VSSTVAYAIGMILTFVVLVLM) form a helical membrane-spanning segment. At 459–460 (KK) the chain is on the lumenal side. Residues 461–481 (GQPALLYLVPCTLITASVVAW) form a helical membrane-spanning segment. The PAL motif lies at 463 to 465 (PAL). Residues 482–520 (RRKEMKKFWKGNSYQMMDHLDCATNEENPVISGEQIVQQ) lie on the Cytoplasmic side of the membrane. A YXXo lysosomal targeting motif motif is present at residues 495-498 (YQMM).

This sequence belongs to the peptidase A22B family. As to quaternary structure, interacts with ITM2B. Glycosylated. In terms of tissue distribution, ubiquitous.

The protein localises to the late endosome membrane. The protein resides in the lysosome membrane. It is found in the membrane. Its function is as follows. Intramembrane-cleaving aspartic protease (I-CLiP) that cleaves type II membrane signal peptides in the hydrophobic plane of the membrane. Functions in FASLG, ITM2B and TNF processing. Catalyzes the intramembrane cleavage of the anchored fragment of shed TNF-alpha (TNF), which promotes the release of the intracellular domain (ICD) for signaling to the nucleus. Also responsible for the intramembrane cleavage of Fas antigen ligand FASLG, which promotes the release of the intracellular FasL domain (FasL ICD). Essential for degradation of the invariant chain CD74 that plays a central role in the function of antigen-presenting cells in the immune system. Plays a role in the regulation of innate and adaptive immunity. Catalyzes the intramembrane cleavage of the simian foamy virus envelope glycoprotein gp130 independently of prior ectodomain shedding by furin or furin-like proprotein convertase (PC)-mediated cleavage proteolysis. This is Signal peptide peptidase-like 2A from Homo sapiens (Human).